Reading from the N-terminus, the 152-residue chain is SsrA-binding protein (152 aa).

It belongs to the SmpB family.

It localises to the cytoplasm. In terms of biological role, required for rescue of stalled ribosomes mediated by trans-translation. Binds to transfer-messenger RNA (tmRNA), required for stable association of tmRNA with ribosomes. tmRNA and SmpB together mimic tRNA shape, replacing the anticodon stem-loop with SmpB. tmRNA is encoded by the ssrA gene; the 2 termini fold to resemble tRNA(Ala) and it encodes a 'tag peptide', a short internal open reading frame. During trans-translation Ala-aminoacylated tmRNA acts like a tRNA, entering the A-site of stalled ribosomes, displacing the stalled mRNA. The ribosome then switches to translate the ORF on the tmRNA; the nascent peptide is terminated with the 'tag peptide' encoded by the tmRNA and targeted for degradation. The ribosome is freed to recommence translation, which seems to be the essential function of trans-translation. The protein is SsrA-binding protein of Lactobacillus helveticus (strain DPC 4571).